The sequence spans 703 residues: Methionine--tRNA ligase (703 aa).

The 'HIGH' region motif lies at 15–25; the sequence is PYANGPVHLGH. Residues Cys-147, Cys-150, Cys-160, and Cys-163 each contribute to the Zn(2+) site. The short motif at 345–349 is the 'KMSKS' region element; that stretch reads KFSKS. Residue Lys-348 coordinates ATP. The region spanning 602–703 is the tRNA-binding domain; sequence DFQKIDLRVA…GEGINGNSVS (102 aa).

It belongs to the class-I aminoacyl-tRNA synthetase family. MetG type 1 subfamily. Homodimer. The cofactor is Zn(2+).

Its subcellular location is the cytoplasm. The enzyme catalyses tRNA(Met) + L-methionine + ATP = L-methionyl-tRNA(Met) + AMP + diphosphate. In terms of biological role, is required not only for elongation of protein synthesis but also for the initiation of all mRNA translation through initiator tRNA(fMet) aminoacylation. The protein is Methionine--tRNA ligase of Chlorobaculum tepidum (strain ATCC 49652 / DSM 12025 / NBRC 103806 / TLS) (Chlorobium tepidum).